The primary structure comprises 1584 residues: Vacuolar membrane-associated protein IML1 (1584 aa).

Residues 1–11 (MFAKLHGKKQR) show a composition bias toward basic residues. Disordered regions lie at residues 1–37 (MFAK…LSSG) and 49–89 (QKKE…GERV). Positions 12–37 (PISSINSQTPRTSNTTHANSISLSSG) are enriched in polar residues. Positions 74-84 (NVNNGGDNNYD) are enriched in low complexity. 2 positions are modified to phosphoserine: S680 and S737. Residues 732–752 (DDVDNSPLGSNTPLPSSESKI) are disordered. Polar residues predominate over residues 738 to 751 (PLGSNTPLPSSESK). Residues 1198–1273 (GEDRITLVNR…DGHYFYQFSP (76 aa)) enclose the DEP domain. A disordered region spans residues 1286–1312 (NSHRSTLSDPKQMLRKASTGSSNDPSA). The span at 1303 to 1312 (STGSSNDPSA) shows a compositional bias: polar residues.

This sequence belongs to the IML1 family. Component of the SEA complex composed of at least IML1/SEA1, RTC1/SEA2, MTC5/SEA3, NPR2, NPR3, SEA4, SEC13 and SEH1.

Its subcellular location is the vacuole membrane. Functionally, component of the SEA complex which coats the vacuolar membrane and is involved in intracellular trafficking, autophagy, response to nitrogen starvation, and amino acid biogenesis. The sequence is that of Vacuolar membrane-associated protein IML1 (IML1) from Saccharomyces cerevisiae (strain ATCC 204508 / S288c) (Baker's yeast).